The primary structure comprises 110 residues: UPF0060 membrane protein ASA_2267 (110 aa).

4 helical membrane-spanning segments follow: residues 7-27, 33-53, 63-83, and 87-107; these read IGLF…PYLW, SVWL…LLSL, AAYG…VDGI, and LWDL…MFAP.

It belongs to the UPF0060 family.

It localises to the cell inner membrane. The chain is UPF0060 membrane protein ASA_2267 from Aeromonas salmonicida (strain A449).